Consider the following 1037-residue polypeptide: Ephrin type-A receptor 5 (1037 aa).

A signal peptide spans 1–24; it reads MRGSGPRGAGRRRPPSGGGDTPIT. Residues 1 to 24 form a disordered region; the sequence is MRGSGPRGAGRRRPPSGGGDTPIT. The Extracellular segment spans residues 25–573; the sequence is PASLAGCYSA…AASSDQSQIP (549 aa). In terms of domain architecture, Eph LBD spans 60–238; sequence EVNLLDSRTV…YYKKCPSVVR (179 aa). Residues Asn264, Asn299, Asn369, Asn423, Asn436, and Asn461 are each glycosylated (N-linked (GlcNAc...) asparagine). Fibronectin type-III domains are found at residues 357-467 and 468-562; these read PPSA…TNQA and APSP…TTPV. The chain crosses the membrane as a helical span at residues 574–594; it reads VIAVSVTVGVILLAVVIGVLL. The Cytoplasmic segment spans residues 595-1037; that stretch reads SGSCCECGCG…VQLVNGMVPL (443 aa). A phosphotyrosine; by autocatalysis mark is found at Tyr650 and Tyr656. In terms of domain architecture, Protein kinase spans 675-936; that stretch reads ITIERVIGAG…EIVNMLDKLI (262 aa). Residues 681–689 and Lys707 contribute to the ATP site; that span reads IGAGEFGEV. Asp800 serves as the catalytic Proton acceptor. A phosphotyrosine; by autocatalysis mark is found at Tyr833 and Tyr982. The region spanning 965–1029 is the SAM domain; it reads GAYRSVGEWL…MNSLQEMKVQ (65 aa). A PDZ-binding motif is present at residues 1035–1037; it reads VPL.

The protein belongs to the protein kinase superfamily. Tyr protein kinase family. Ephrin receptor subfamily. As to quaternary structure, heterotetramer upon binding of the ligand. The heterotetramer is composed of an ephrin dimer and a receptor dimer. Oligomerization is probably required to induce biological responses. Interacts (via SAM domain) with SAMD5 (via SAM domain). Phosphorylated. Phosphorylation is stimulated by the ligand EFNA5. Dephosphorylation upon stimulation by glucose, inhibits EPHA5 forward signaling and results in insulin secretion. In terms of tissue distribution, almost exclusively expressed in the nervous system in cortical neurons, cerebellar Purkinje cells and pyramidal neurons within the cortex and hippocampus. Display an increasing gradient of expression from the forebrain to hindbrain and spinal cord.

The protein resides in the cell membrane. It localises to the cell projection. It is found in the axon. Its subcellular location is the dendrite. It catalyses the reaction L-tyrosyl-[protein] + ATP = O-phospho-L-tyrosyl-[protein] + ADP + H(+). In terms of biological role, receptor tyrosine kinase which binds promiscuously GPI-anchored ephrin-A family ligands residing on adjacent cells, leading to contact-dependent bidirectional signaling into neighboring cells. The signaling pathway downstream of the receptor is referred to as forward signaling while the signaling pathway downstream of the ephrin ligand is referred to as reverse signaling. Among GPI-anchored ephrin-A ligands, EFNA5 most probably constitutes the cognate/functional ligand for EPHA5. Functions as an axon guidance molecule during development and may be involved in the development of the retinotectal, entorhino-hippocampal and hippocamposeptal pathways. Together with EFNA5 plays also a role in synaptic plasticity in adult brain through regulation of synaptogenesis. In addition to its function in the nervous system, the interaction of EPHA5 with EFNA5 mediates communication between pancreatic islet cells to regulate glucose-stimulated insulin secretion. This is Ephrin type-A receptor 5 (EPHA5) from Homo sapiens (Human).